A 320-amino-acid chain; its full sequence is Probable cell division protein WhiA (320 aa).

The H-T-H motif DNA-binding region spans 276-310 (TLKELGEMVAGGKISKSGINHRLRKIDEIAERLRA).

This sequence belongs to the WhiA family.

Involved in cell division and chromosome segregation. The protein is Probable cell division protein WhiA of Geobacillus thermodenitrificans (strain NG80-2).